Here is a 158-residue protein sequence, read N- to C-terminus: MSLFDGKKVIIIGDRDGIPGPAMEECLKGTGAEVVYSSTECFVUTAAGAMDLENQKRVMDLTEKHNAENVVVILGAAEAEAAGLAAETVTNGDPTFAGPLAGVQLGLRVYHAVEPQFKDAVNAEVYEDQIGMMEMVLEVDAIIEEMSNIRNEFGKFKD.

U44 is an active-site residue. A non-standard amino acid (selenocysteine) is located at residue U44.

Belongs to the GrdA family. Monomer. Component of the glycine, sarcosine and betaine reductase complexes, together with components B and C.

It catalyses the reaction acetyl phosphate + [thioredoxin]-disulfide + NH4(+) + H2O = [thioredoxin]-dithiol + glycine + phosphate + H(+). It carries out the reaction acetyl phosphate + methylamine + [thioredoxin]-disulfide + H2O = sarcosine + [thioredoxin]-dithiol + phosphate + H(+). The catalysed reaction is acetyl phosphate + trimethylamine + [thioredoxin]-disulfide + H2O = glycine betaine + [thioredoxin]-dithiol + phosphate + H(+). In the first step of glycine, betaine and sarcosine reductases, the substrate is bound to component PB via a Schiff base intermediate. Then the PB-activated substrate is nucleophilically attacked by the selenol anion of component PA to transform it to a carboxymethylated selenoether and the respective amine. By action of component PC, acetyl phosphate is formed, leaving component PA in its oxidized state. Finally component PA becomes reduced by the thioredoxin system to start a new catalytic cycle of reductive deamination. The chain is Glycine/sarcosine/betaine reductase complex component A from Alkaliphilus metalliredigens (strain QYMF).